The sequence spans 270 residues: MKLSLSPPPYADAPVVVLISGLGGSGSYWLPQLAVLEQEYQVICYDQRGTGNNPDTLEEDYSIAQMAAELHQALVAAGIERYAVVGHALGALVGMQLALDYPASLTVLVSVNGWLRINAHTRRCFQVREQLLHSGGAQAWVEAQPLFLYPADWMAARAPRLEAEDALALAHFQGKNNLLRRLNALKRADFSRHTDRIRCPVQIICASDDLLVPSACSSELHAALPDSQKMVMRYGGHACNVTDPETFNALLLNGLASLLHHREAACKELL.

Belongs to the AB hydrolase superfamily. Hydrolase RutD family.

It catalyses the reaction carbamate + 2 H(+) = NH4(+) + CO2. Functionally, involved in pyrimidine catabolism. May facilitate the hydrolysis of carbamate, a reaction that can also occur spontaneously. The sequence is that of Putative carbamate hydrolase RutD from Escherichia coli O44:H18 (strain 042 / EAEC).